We begin with the raw amino-acid sequence, 346 residues long: NADH-ubiquinone oxidoreductase chain 2 (346 aa).

11 helical membrane-spanning segments follow: residues Met-1–Ser-21, Trp-26–Trp-46, Phe-60–Gly-80, Met-96–Val-116, Leu-122–Leu-142, Ser-151–Gly-171, Leu-178–Ser-198, Leu-199–Leu-219, Val-242–Gly-262, Leu-274–Leu-294, and Leu-320–Gly-340.

Belongs to the complex I subunit 2 family.

Its subcellular location is the mitochondrion inner membrane. The enzyme catalyses a ubiquinone + NADH + 5 H(+)(in) = a ubiquinol + NAD(+) + 4 H(+)(out). Its function is as follows. Core subunit of the mitochondrial membrane respiratory chain NADH dehydrogenase (Complex I) that is believed to belong to the minimal assembly required for catalysis. Complex I functions in the transfer of electrons from NADH to the respiratory chain. The immediate electron acceptor for the enzyme is believed to be ubiquinone. The protein is NADH-ubiquinone oxidoreductase chain 2 (ND2) of Branchiostoma floridae (Florida lancelet).